We begin with the raw amino-acid sequence, 1488 residues long: Indigoidine synthase (1488 aa).

The tract at residues 229–585 (KNRAQRHPEQ…GGDGVARGYL (357 aa)) is adenylation. Residues 1137–1212 (APRNPLEHQV…KLAAWLSRAR (76 aa)) form the Carrier domain. An O-(pantetheine 4'-phosphoryl)serine modification is found at Ser-1172. The thioesterase stretch occupies residues 1230-1346 (PIYCWPGLGG…ERVAAMNRKA (117 aa)).

It belongs to the ATP-dependent AMP-binding enzyme family. Requires pantetheine 4'-phosphate as cofactor.

The enzyme catalyses 2 FMN + 2 L-glutamine + 2 ATP + O2 = indigoidine + 2 FMNH2 + 2 AMP + 2 diphosphate + 2 H2O. It catalyses the reaction FMN + L-glutamine + ATP = 3-amino-1,5-dihydropyridine-2,6-dione + FMNH2 + AMP + diphosphate. The catalysed reaction is 2 3-amino-1,5-dihydropyridine-2,6-dione + O2 = indigoidine + 2 H2O. It participates in pigment biosynthesis. Its function is as follows. Nonribosomal peptide synthetase involved in the biosynthesis of the blue pigment indigoidine, which is implicated in pathogenicity and protection from oxidative stress. Catalyzes the synthesis of the blue pigment using L-Gln as a substrate. Two glutamine molecules are cyclized and oxidized to form indigoidine. The polypeptide is Indigoidine synthase (Dickeya dadantii (strain 3937) (Erwinia chrysanthemi (strain 3937))).